The sequence spans 301 residues: Sulfate adenylyltransferase subunit 2 (301 aa).

A disordered region spans residues 279 to 301; that stretch reads RQGRMIDHDSSGSMEEKKKQGYF.

The protein belongs to the PAPS reductase family. CysD subfamily. As to quaternary structure, heterodimer composed of CysD, the smaller subunit, and CysN.

The catalysed reaction is sulfate + ATP + H(+) = adenosine 5'-phosphosulfate + diphosphate. The protein operates within sulfur metabolism; hydrogen sulfide biosynthesis; sulfite from sulfate: step 1/3. In terms of biological role, with CysN forms the ATP sulfurylase (ATPS) that catalyzes the adenylation of sulfate producing adenosine 5'-phosphosulfate (APS) and diphosphate, the first enzymatic step in sulfur assimilation pathway. APS synthesis involves the formation of a high-energy phosphoric-sulfuric acid anhydride bond driven by GTP hydrolysis by CysN coupled to ATP hydrolysis by CysD. The protein is Sulfate adenylyltransferase subunit 2 of Marinomonas sp. (strain MWYL1).